Consider the following 122-residue polypeptide: Large ribosomal subunit protein uL14 (122 aa).

It belongs to the universal ribosomal protein uL14 family. As to quaternary structure, part of the 50S ribosomal subunit. Forms a cluster with proteins L3 and L19. In the 70S ribosome, L14 and L19 interact and together make contacts with the 16S rRNA in bridges B5 and B8.

In terms of biological role, binds to 23S rRNA. Forms part of two intersubunit bridges in the 70S ribosome. The protein is Large ribosomal subunit protein uL14 of Ligilactobacillus salivarius (strain UCC118) (Lactobacillus salivarius).